A 634-amino-acid chain; its full sequence is RING finger protein 207 (634 aa).

Residues 25–64 (CPLCHVQYERPCLLDCFHDFCAGCLRGRATDGRLTCPLCQ) form an RING-type zinc finger. A B box-type; atypical zinc finger spans residues 93–145 (VEAVRCANCDLECSEQDVETTYFCNTCGQPLCARCRDETHRARMFARHDIVAL). Residues Cys-98, Cys-101, Cys-127, and His-132 each contribute to the Zn(2+) site. 2 coiled-coil regions span residues 422 to 457 (EHCR…KHHS) and 494 to 518 (EIWE…HDLL). The tract at residues 552–634 (FQAPVDEQSE…DVPTWREHPT (83 aa)) is disordered.

Interacts with the core-glycosylated, but not the fully glycosylated form of KCNH2/HERG. Interacts with DNAJA1 and HSPA8. Interacts (via the C-terminus) with HSPA1A; this interaction additively increases KCNH2 expression.

It localises to the cytoplasm. Its function is as follows. Plays a role in cardiac repolarization possibly by stabilizing membrane expression of the potassium channel KCNH2/HERG, or by assisting its synthesis, folding or export from the endoplasmic reticulum, in a heat shock protein-dependent manner. In Homo sapiens (Human), this protein is RING finger protein 207 (RNF207).